The chain runs to 115 residues: Large ribosomal subunit protein bL19 (115 aa).

Belongs to the bacterial ribosomal protein bL19 family.

This protein is located at the 30S-50S ribosomal subunit interface and may play a role in the structure and function of the aminoacyl-tRNA binding site. The protein is Large ribosomal subunit protein bL19 of Enterobacter sp. (strain 638).